A 439-amino-acid chain; its full sequence is Protein ABHD8 (439 aa).

Disordered stretches follow at residues 49-70 and 124-156; these read AGPAPAAAPPPPSSASSDAAQG and PAGSDGRLAPGSAGSGSGSGSGGRRRRARRPKR. Residues 136–145 show a composition bias toward gly residues; the sequence is AGSGSGSGSG. Residues 146–156 show a composition bias toward basic residues; that stretch reads GRRRRARRPKR. The AB hydrolase-1 domain occupies 177 to 279; sequence VLFFIHGVGG…HKVIMINGGG (103 aa). Residues S252, D370, and H398 each act as charge relay system in the active site.

It belongs to the AB hydrolase superfamily. In terms of assembly, interacts with NLRP3 (via NACHT and LLR domains); this interaction is enhanced in the presence of NLRP3 inflammasome inducers, such as ATP, nigericin, silica, or alum. Interacts with ZDHHC12. As to quaternary structure, (Microbial infection) Interacts with SARS-CoV-2 nucleoprotein N; this interaction disrupts the NLRP3-ABHD8 association, enhancing NLRP3 stability, ultimately leading to increased inflammasome activation.

The protein resides in the cytoplasm. Its function is as follows. Negatively regulates NLRP3-driven inflammation. Promotes NLRP3 degradation through the chaperone-mediated autophagy (CMA) pathway, hence attenuating inflammasome activation and IL1B secretion. Acts by recruiting palmitoyltransferase ZDHHC12 to NLRP3, facilitating NLRP3 palmitoylation and subsequent degradation. This is Protein ABHD8 from Homo sapiens (Human).